A 967-amino-acid chain; its full sequence is Probable helicase DDB_G0274399 (967 aa).

The segment at 161–192 is disordered; the sequence is EMTDDEDTAPTSAATHVGAPTKSTTTTTTTTT. ATP is bound at residue 357-364; the sequence is GPPGTGKT. Disordered stretches follow at residues 529-553 and 892-967; these read SAIP…QDTS and QKQK…RTRR. Residues 890-949 adopt a coiled-coil conformation; that stretch reads NLQKQKDIEKRKKQHKRQKQKSKENDKKKQLKKRKELNNNDNNNNNKESSNKEVQEITNA. Over residues 900–909 the composition is skewed to basic residues; the sequence is RKKQHKRQKQ. Positions 928–937 are enriched in low complexity; that stretch reads NNDNNNNNKE.

Belongs to the DNA2/NAM7 helicase family.

The protein localises to the nucleus. The sequence is that of Probable helicase DDB_G0274399 from Dictyostelium discoideum (Social amoeba).